The following is a 457-amino-acid chain: Cysteine--tRNA ligase (457 aa).

C27 contacts Zn(2+). Residues 29-39 carry the 'HIGH' region motif; it reads ITPQSEPHIGH. 3 residues coordinate Zn(2+): C207, H232, and E236. Residues 265–269 carry the 'KMSKS' region motif; the sequence is KMSKS. K268 lines the ATP pocket.

The protein belongs to the class-I aminoacyl-tRNA synthetase family. In terms of assembly, monomer. Zn(2+) serves as cofactor.

It is found in the cytoplasm. It catalyses the reaction tRNA(Cys) + L-cysteine + ATP = L-cysteinyl-tRNA(Cys) + AMP + diphosphate. The polypeptide is Cysteine--tRNA ligase (Dehalococcoides mccartyi (strain ATCC BAA-2100 / JCM 16839 / KCTC 5957 / BAV1)).